Reading from the N-terminus, the 231-residue chain is 2-C-methyl-D-erythritol 4-phosphate cytidylyltransferase (231 aa).

Belongs to the IspD/TarI cytidylyltransferase family. IspD subfamily.

It carries out the reaction 2-C-methyl-D-erythritol 4-phosphate + CTP + H(+) = 4-CDP-2-C-methyl-D-erythritol + diphosphate. The protein operates within isoprenoid biosynthesis; isopentenyl diphosphate biosynthesis via DXP pathway; isopentenyl diphosphate from 1-deoxy-D-xylulose 5-phosphate: step 2/6. In terms of biological role, catalyzes the formation of 4-diphosphocytidyl-2-C-methyl-D-erythritol from CTP and 2-C-methyl-D-erythritol 4-phosphate (MEP). The polypeptide is 2-C-methyl-D-erythritol 4-phosphate cytidylyltransferase (Pseudoalteromonas atlantica (strain T6c / ATCC BAA-1087)).